The following is a 183-amino-acid chain: MAAPRPCADGPCCSHPSAAPGVQQTLDEMDFERGIWSAALNGDLGRVKYLIQKAVDPSQPDSAGYTALHYASRNGHYAVCQFLLESGAKCDAQTHGGATALHRASYCGHTDIARLLLSHGSNPRLVDADGMTSLHKAAEKGHVDICSLLLQHSPALKAVRDRKSRLACDLLPGNSDLRDLLAS.

4 ANK repeats span residues Asp30–Gln59, Ala63–Ala92, Gly96–Leu125, and Asp129–Ala158. Ser153 is modified (phosphoserine).

Belongs to the ANKRD39 family.

This chain is Ankyrin repeat domain-containing protein 39 (ANKRD39), found in Bos taurus (Bovine).